Reading from the N-terminus, the 692-residue chain is Sulfhydryl oxidase 2 (692 aa).

The first 38 residues, 1–38 (MAAARAVARDPGAYARQPPSLRAARLPRLLFLLAVVAA), serve as a signal peptide directing secretion. Positions 54–172 (SDAVWLLDSG…RQTMIDFLQN (119 aa)) constitute a Thioredoxin domain. A glycan (N-linked (GlcNAc...) asparagine) is linked at Asn-71. Residues Cys-85 and Cys-88 each act as nucleophile in the active site. Intrachain disulfides connect Cys-85-Cys-88 and Cys-116-Cys-125. 3 N-linked (GlcNAc...) asparagine glycosylation sites follow: Asn-172, Asn-212, and Asn-260. A disulfide bond links Cys-412 and Cys-424. Residues 415–524 (SRLELRGYPC…EDPKFPKVPW (110 aa)) form the ERV/ALR sulfhydryl oxidase domain. FAD-binding positions include Arg-420, Trp-427, His-431, Glu-472, His-476, 499-506 (WRKHNMVN), Lys-521, and Trp-524. Cysteines 470 and 473 form a disulfide. Residues Cys-530 and Cys-533 are joined by a disulfide bond. Positions 568–607 (DQGSPGEWEAQGREQEEGKGLNPSGKSWRHHDTGSLRPPH) are disordered. The segment covering 577-586 (AQGREQEEGK) has biased composition (basic and acidic residues). Residues 656–676 (SLCVVLYVASSLFLMIMYFFF) form a helical membrane-spanning segment.

It belongs to the quiescin-sulfhydryl oxidase (QSOX) family. FAD is required as a cofactor.

Its subcellular location is the membrane. It catalyses the reaction 2 R'C(R)SH + O2 = R'C(R)S-S(R)CR' + H2O2. Catalyzes the oxidation of sulfhydryl groups in peptide and protein thiols to disulfides with the reduction of oxygen to hydrogen peroxide. May contribute to disulfide bond formation in a variety of secreted proteins. The sequence is that of Sulfhydryl oxidase 2 (Qsox2) from Mus musculus (Mouse).